A 124-amino-acid chain; its full sequence is Multifunctional methyltransferase subunit TRM112 homolog B (124 aa).

Residues Arg-2–His-120 form the TRM112 domain.

This sequence belongs to the TRM112 family. Interacts with TRM9. As to expression, expressed in anthers.

In terms of biological role, acts as an activator of both rRNA/tRNA and protein methyltransferases. Required for TRM9 tRNA methyltransferase activity. The protein is Multifunctional methyltransferase subunit TRM112 homolog B of Arabidopsis thaliana (Mouse-ear cress).